The primary structure comprises 341 residues: Fructose-1,6-bisphosphatase, cytosolic (341 aa).

Mg(2+) contacts are provided by Glu71, Glu100, Asp121, Leu123, and Asp124. Residues 124–127, Asn215, Tyr247, Tyr267, and Lys277 contribute to the substrate site; that span reads DGCS. Glu283 contributes to the Mg(2+) binding site.

This sequence belongs to the FBPase class 1 family. It depends on Mg(2+) as a cofactor.

Its subcellular location is the cytoplasm. It catalyses the reaction beta-D-fructose 1,6-bisphosphate + H2O = beta-D-fructose 6-phosphate + phosphate. In Beta vulgaris (Sugar beet), this protein is Fructose-1,6-bisphosphatase, cytosolic.